The following is a 278-amino-acid chain: Elongation factor Ts (278 aa).

Positions Thr-80 to Val-83 are involved in Mg(2+) ion dislocation from EF-Tu.

It belongs to the EF-Ts family.

It is found in the cytoplasm. Functionally, associates with the EF-Tu.GDP complex and induces the exchange of GDP to GTP. It remains bound to the aminoacyl-tRNA.EF-Tu.GTP complex up to the GTP hydrolysis stage on the ribosome. The protein is Elongation factor Ts of Pseudarthrobacter chlorophenolicus (strain ATCC 700700 / DSM 12829 / CIP 107037 / JCM 12360 / KCTC 9906 / NCIMB 13794 / A6) (Arthrobacter chlorophenolicus).